Consider the following 331-residue polypeptide: Protein FLX-like 1 (331 aa).

Residues 1–51 (MSGRNRGPPPPSMKGGSYSGLQAPVHQPPFVRGLGGGPVPPPPHPSMIDDS) form a disordered region. The stretch at 69 to 252 (ILEDRLAAQN…AEIANSETSA (184 aa)) forms a coiled coil. The segment covering 306-321 (QAAWAGGYDPQQQQQQ) has biased composition (low complexity). The segment at 306–331 (QAAWAGGYDPQQQQQQQPPPQGQGHR) is disordered. The segment covering 322-331 (QPPPQGQGHR) has biased composition (pro residues).

Belongs to the FLX family. In terms of assembly, interacts with FRI.

Its function is as follows. Has no transcriptional activation activity. The protein is Protein FLX-like 1 (FLXL1) of Arabidopsis thaliana (Mouse-ear cress).